Reading from the N-terminus, the 715-residue chain is MKFKKKNYTSQVDEMDCGCAALSMILKSYGTEKSLASLRLLAGTTIEGTSALGIKKAAEILEFSVQALRTDASLFEMKNAPYPFIAHVIKDQKYPHYYVITGANKNSVFIADPDPTIKMTKLSKEAFLSEWTGISLFLSTTPSYHPTKEKASSLLSFIPIITRQKKVILNIVIASFIVTLINILGSYYLQSMIDSYIPNALMGTLGIISVGLLLTYIIQQVLEFAKAFLLNVLSQRLAIDVILSYIRHIFQLPMSFFSTRRTGEITSRFSDASSILDAIASTILSLFLDLTIVVMTGLILGLQNMQLFLLVLLAIPLYIVVIIIFTPLFEKQNHEVMQTNAVLNSSIIEDINGIETIKALASEQERYQKIDYEFASYLKKAFTLQKSEAIQGLIKAIIQLTLSVTILWFGATLVISQKITLGQLITFNALLSYFTNPITNIINLQTKLQKARVANERLNEVYLVPSEFEEKKTELSLSHFNLNMSDISYQYGFGRKVLSEIELSIKENEKLTIVGMSGSGKSTLVKLLVNFFQPTSGTITLGGIDLQQFDKHQLRRLINYLPQQPYIFTGSILDNLLLGANENASQEEILKAVELAEIRADIEQMQLGYQTELSSDASSLSGGQKQRIALARALLSPAKILILDEATSNLDMITEKKILKNLLPLDKTIIFIAHRLSVAEMSHRIIVVDQGKVIESGSHVDLLAQNGFYEQLYHN.

The Peptidase C39 domain maps to 11–138; that stretch reads QVDEMDCGCA…SEWTGISLFL (128 aa). C17 is a catalytic residue. 6 helical membrane passes run 167–187, 197–217, 237–257, 282–302, 307–327, and 396–416; these read VILN…LGSY, IPNA…LTYI, LAID…MSFF, TILS…ILGL, LFLL…IFTP, and AIIQ…LVIS. The ABC transmembrane type-1 domain occupies 168 to 450; that stretch reads ILNIVIASFI…IINLQTKLQK (283 aa). The ABC transporter domain occupies 482-715; it reads LNMSDISYQY…NGFYEQLYHN (234 aa). 515-522 contacts ATP; the sequence is GMSGSGKS.

Belongs to the ABC transporter superfamily. Bacteriocin (lactococcin) exporter (TC 3.A.1.112.3) family.

The protein localises to the cell membrane. Involved in the export process of the bacteriocin lactococcin A. The polypeptide is Lactococcin-A transport/processing ATP-binding protein LcnC (lcnC) (Lactococcus lactis subsp. lactis (Streptococcus lactis)).